Reading from the N-terminus, the 227-residue chain is 2,3-bisphosphoglycerate-dependent phosphoglycerate mutase (227 aa).

Residues arginine 7 to asparagine 14, threonine 20 to glycine 21, arginine 59, glutamate 86 to tyrosine 89, lysine 97, arginine 113 to arginine 114, and glycine 182 to asparagine 183 each bind substrate. Residue histidine 8 is the Tele-phosphohistidine intermediate of the active site. Glutamate 86 serves as the catalytic Proton donor/acceptor.

The protein belongs to the phosphoglycerate mutase family. BPG-dependent PGAM subfamily. As to quaternary structure, homodimer.

The catalysed reaction is (2R)-2-phosphoglycerate = (2R)-3-phosphoglycerate. It participates in carbohydrate degradation; glycolysis; pyruvate from D-glyceraldehyde 3-phosphate: step 3/5. Catalyzes the interconversion of 2-phosphoglycerate and 3-phosphoglycerate. In Neisseria meningitidis serogroup C (strain 053442), this protein is 2,3-bisphosphoglycerate-dependent phosphoglycerate mutase.